The following is a 344-amino-acid chain: Inositol 2-dehydrogenase/D-chiro-inositol 3-dehydrogenase (344 aa).

It belongs to the Gfo/Idh/MocA family. As to quaternary structure, homotetramer.

The enzyme catalyses myo-inositol + NAD(+) = scyllo-inosose + NADH + H(+). It catalyses the reaction 1D-chiro-inositol + NAD(+) = scyllo-inosine + NADH + H(+). It participates in polyol metabolism; myo-inositol degradation into acetyl-CoA; acetyl-CoA from myo-inositol: step 1/7. Functionally, involved in the oxidation of myo-inositol (MI) and D-chiro-inositol (DCI) to 2-keto-myo-inositol (2KMI or 2-inosose) and 1-keto-D-chiro-inositol (1KDCI), respectively. Can also use D-glucose and D-xylose, and shows a trace of activity with D-ribose and D-fructose. The protein is Inositol 2-dehydrogenase/D-chiro-inositol 3-dehydrogenase (iolG) of Bacillus subtilis (strain 168).